The following is an 847-amino-acid chain: Ras GTPase-activating protein 2 (847 aa).

Residues 1 to 18 show a composition bias toward low complexity; the sequence is MAAAAPAAAALTEAPAVP. Residues 1-31 form a disordered region; sequence MAAAAPAAAALTEAPAVPGTAEPETGDEDSR. Ala2 is modified (N-acetylalanine). C2 domains are found at residues 19–137 and 148–288; these read GTAE…ETWF and VQGK…QAWY. The Ras-GAP domain maps to 371 to 588; sequence NKLVPFITAV…TDVKKFLDEI (218 aa). Ser554 carries the post-translational modification Phosphoserine. A PH domain is found at 603–704; sequence VHLKEGEMYK…WIDMLCRVSR (102 aa). The segment at 706-742 adopts a Btk-type zinc-finger fold; it reads NHNRLSSFHPSAYLNGNWLCCQETSEGTPGCKPCTAG. The Zn(2+) site is built by His714, Cys725, Cys726, and Cys736. A disordered region spans residues 819 to 847; the sequence is DEPHEKYRKKRSSSAKYGSKENPIVGKIS.

As to expression, widely expressed. Higher expression in brain, placenta, and kidney.

The protein resides in the cell membrane. Functionally, inhibitory regulator of the Ras-cyclic AMP pathway. May bind inositol tetrakisphosphate (IP4) and phospholipids. In Rattus norvegicus (Rat), this protein is Ras GTPase-activating protein 2 (Rasa2).